Consider the following 242-residue polypeptide: Uridylate kinase (242 aa).

Residue 16–19 coordinates ATP; it reads KVSG. Glycine 58 contributes to the UMP binding site. Residues glycine 59 and arginine 63 each coordinate ATP. Residues aspartate 78 and 139–146 each bind UMP; that span reads TGNPFCTT. Positions 166, 167, 172, and 175 each coordinate ATP.

This sequence belongs to the UMP kinase family. As to quaternary structure, homohexamer.

It is found in the cytoplasm. The enzyme catalyses UMP + ATP = UDP + ADP. The protein operates within pyrimidine metabolism; CTP biosynthesis via de novo pathway; UDP from UMP (UMPK route): step 1/1. Inhibited by UTP. Functionally, catalyzes the reversible phosphorylation of UMP to UDP. This Rickettsia massiliae (strain Mtu5) protein is Uridylate kinase.